The following is a 191-amino-acid chain: CASP-like protein 4C2 (191 aa).

Topologically, residues 1 to 29 (MEAADSATNNSKDTHFYGKSRAENRRRSD) are cytoplasmic. A helical transmembrane segment spans residues 30–50 (AMLLLFRALTFSFSLAAVVVM). Residues 51–72 (GTNRYRINPQLKVSWYDFEPYR) lie on the Extracellular side of the membrane. Residues 73–93 (YVLAVNAIICIYSFVETWLAV) traverse the membrane as a helical segment. The Cytoplasmic portion of the chain corresponds to 94-116 (YTYLQGSYLLPEIFQVWFDYGHD). The chain crosses the membrane as a helical span at residues 117–137 (QGFAYLLFSANSAGVAMAQLL). Topologically, residues 138-161 (QSGNTLIHGAYHCTEAGGYCTQAR) are extracellular. A helical transmembrane segment spans residues 162 to 182 (VSIALGFVAFLFLALSSLLTG). Topologically, residues 183–191 (LRVARWYLR) are cytoplasmic.

This sequence belongs to the Casparian strip membrane proteins (CASP) family. In terms of assembly, homodimer and heterodimers.

The protein localises to the cell membrane. In Physcomitrium patens (Spreading-leaved earth moss), this protein is CASP-like protein 4C2.